The following is a 416-amino-acid chain: Phosphoglycerate kinase (416 aa).

Valine 23, aspartate 24, phenylalanine 25, asparagine 26, arginine 39, serine 62, histidine 63, glycine 65, arginine 66, leucine 121, arginine 122, histidine 169, and arginine 170 together coordinate (2R)-3-phosphoglycerate. Glycine 213 lines the ADP pocket. Glycine 213 provides a ligand contact to CDP. Residues alanine 214 and lysine 215 each coordinate AMP. Alanine 214 contacts ATP. Residue alanine 214 coordinates Mg(2+). Residue aspartate 218 participates in CDP binding. Aspartate 218 serves as a coordination point for Mg(2+). Residue lysine 219 coordinates AMP. Lysine 219 is an ATP binding site. Position 237 (glycine 237) interacts with ADP. Glycine 237 provides a ligand contact to CDP. Residues glycine 238 and glycine 312 each contribute to the AMP site. ATP is bound by residues glycine 238 and glycine 312. Glycine 337 and phenylalanine 342 together coordinate CDP. Phenylalanine 342 is an ADP binding site. Glutamate 343 lines the AMP pocket. Residues glutamate 343, aspartate 374, and threonine 375 each contribute to the ATP site. Aspartate 374 is a binding site for Mg(2+).

The protein belongs to the phosphoglycerate kinase family. In terms of assembly, monomer. Mg(2+) serves as cofactor.

It localises to the cytoplasm. The protein resides in the mitochondrion. The enzyme catalyses (2R)-3-phosphoglycerate + ATP = (2R)-3-phospho-glyceroyl phosphate + ADP. Its pathway is carbohydrate degradation; glycolysis; pyruvate from D-glyceraldehyde 3-phosphate: step 2/5. Functionally, catalyzes one of the two ATP producing reactions in the glycolytic pathway via the reversible conversion of 1,3-diphosphoglycerate to 3-phosphoglycerate. Both L- and D- forms of purine and pyrimidine nucleotides can be used as substrates, but the activity is much lower on pyrimidines. Negatively regulates the biosynthesis of acetyl-CoA from pyruvate in the mitochondrion. This Agaricus bisporus (White button mushroom) protein is Phosphoglycerate kinase (pgkA).